The primary structure comprises 360 residues: E3 ubiquitin-protein ligase HAKAI homolog (360 aa).

Over residues 1 to 11 (MLQIRLRRDSP) the composition is skewed to basic and acidic residues. The segment at 1 to 24 (MLQIRLRRDSPTETGNGARPSPTE) is disordered. The RING-type zinc-finger motif lies at 72 to 107 (CVRCDFPIAIYGRLIPCDHAFCLECARSDSICYLCD). Residues 123–148 (FICAAPHCLRSFLKKLDFEAHVHDLH) form a C2H2-type zinc finger. The disordered stretch occupies residues 156–360 (AEKEDGNQSD…QENRDGFGQE (205 aa)). 3 stretches are compositionally biased toward polar residues: residues 163–179 (QSDVQSTMQQSSASEST), 186–214 (SQLQQSRELNRSASFAKSQSGFSQVQNYP), and 270–283 (YPTTESGSSQQFFN). A compositionally biased stretch (low complexity) spans 293–304 (ESGGSEQSSLLG).

Belongs to the Hakai family. In terms of assembly, interacts with MTB and VIR. Associates with MTA, MTB, FIP37 and VIR to form the m6A writer complex which is essential for adenosine methylation at specific mRNA sequences.

It is found in the nucleus speckle. The protein localises to the nucleus. Its subcellular location is the nucleoplasm. The enzyme catalyses S-ubiquitinyl-[E2 ubiquitin-conjugating enzyme]-L-cysteine + [acceptor protein]-L-lysine = [E2 ubiquitin-conjugating enzyme]-L-cysteine + N(6)-ubiquitinyl-[acceptor protein]-L-lysine.. In terms of biological role, probable E3 ubiquitin-protein ligase which is a subunit of the N6-methyltransferase complex, a multiprotein complex that mediates N6-methyladenosine (m6A) methylation at the 5'-[AG]GAC-3' consensus sites of some mRNAs. Associates with MTA, MTB, FIP37 and VIR to form the m6A writer complex which is essential for adenosine methylation at specific mRNA sequences. N6-methyladenosine (m6A) plays a role in mRNA stability, processing, translation efficiency and editing. The polypeptide is E3 ubiquitin-protein ligase HAKAI homolog (Arabidopsis thaliana (Mouse-ear cress)).